The chain runs to 129 residues: MTGALPDGADRRRAAYRFGHRAEWLALAALMLKGYWPIGRRVSVAGGEIDLVVRRWNTVVFVEVKARAKRDDAREAIDGAKRRRFSRAVRAWIGRNAWCAGATFRADAVFVGHWAWPAHVERVFTIEGL.

Belongs to the UPF0102 family.

The chain is UPF0102 protein Mrad2831_2938 from Methylobacterium radiotolerans (strain ATCC 27329 / DSM 1819 / JCM 2831 / NBRC 15690 / NCIMB 10815 / 0-1).